The chain runs to 550 residues: Natural resistance-associated macrophage protein 1 (550 aa).

The interval 1-45 is disordered; sequence MTGDKGPQRLSGSSYGSISSPTSPTSPGPQQAPPRETYLSEKIPI. Over 1–58 the chain is Cytoplasmic; that stretch reads MTGDKGPQRLSGSSYGSISSPTSPTSPGPQQAPPRETYLSEKIPIPDTKPGTFSLRKL. Over residues 11-23 the composition is skewed to low complexity; sequence SGSSYGSISSPTS. A helical transmembrane segment spans residues 59-76; it reads WAFTGPGFLMSIAFLDPG. Residues 77-85 lie on the Extracellular side of the membrane; the sequence is NIESDLQAG. Residues 86–105 form a helical membrane-spanning segment; that stretch reads AVAGFKLLWVLLWATVLGLL. Residues 106-142 are Cytoplasmic-facing; that stretch reads CQRLAARLGVVTGKDLGEVCHLYYPKVPRTVLWLTIE. Residues 143-163 form a helical membrane-spanning segment; that stretch reads LAIVGSDMQEVIGTAIAFNLL. Topologically, residues 164–167 are extracellular; it reads SAGR. A helical membrane pass occupies residues 168–187; sequence IPLWGGVLITIVDTFFFLFL. Topologically, residues 188–196 are cytoplasmic; it reads DNYGLRKLE. The helical transmembrane segment at 197 to 217 threads the bilayer; it reads AFFGLLITIMALTFGYEYVVA. The Extracellular segment spans residues 218–240; sequence RPEQGALLRGLFLPSCPGCGHPE. The helical transmembrane segment at 241 to 259 threads the bilayer; that stretch reads LLQAVGIVGAIIMPHNIYL. The Cytoplasmic segment spans residues 260–287; it reads HSALVKSREIDRARRADIREANMYFLIE. Residues 288-307 form a helical membrane-spanning segment; that stretch reads ATIALSVSFIINLFVMAVFG. At 308–349 the chain is on the extracellular side; sequence QAFYQKTNQAAFNICANSSLHDYAKIFPMNNATVAVDIYQGG. N324 and N338 each carry an N-linked (GlcNAc...) asparagine glycan. The chain crosses the membrane as a helical span at residues 350 to 369; it reads VILGCLFGPAALYIWAIGLL. Over 370-400 the chain is Cytoplasmic; sequence AAGQSSTMTGTYAGQFVMEGFLRLRWSRFAR. Residues 401–418 form a helical membrane-spanning segment; that stretch reads VLLTRSCAILPTVLVAVF. Residues 419 to 429 lie on the Extracellular side of the membrane; it reads RDLRDLSGLND. A helical membrane pass occupies residues 430–450; that stretch reads LLNVLQSLLLPFAVLPILTFT. At 451–466 the chain is on the cytoplasmic side; the sequence is SMPTLMQEFANGLLNK. Residues 467 to 488 form a helical membrane-spanning segment; that stretch reads VVTSSIMVLVCAINLYFVVSYL. At 489 to 496 the chain is on the extracellular side; it reads PSLPHPAY. The chain crosses the membrane as a helical span at residues 497–516; it reads FGLAALLAAAYLGLSTYLVW. The Cytoplasmic portion of the chain corresponds to 517–550; that stretch reads TCCLAHGATFLAHSSHHHFLYGLLEEDQKGETSG.

Belongs to the NRAMP family. As to expression, macrophages; peripheral blood leukocytes, lung, spleen and liver.

The protein localises to the late endosome membrane. Its subcellular location is the lysosome membrane. It carries out the reaction Zn(2+)(in) + H(+)(out) = Zn(2+)(out) + H(+)(in). The enzyme catalyses Fe(2+)(in) + H(+)(out) = Fe(2+)(out) + H(+)(in). The catalysed reaction is Mn(2+)(in) + H(+)(out) = Mn(2+)(out) + H(+)(in). Macrophage-specific antiporter that fluxes metal ions in either direction against a proton gradient. Localized to late endosomal lysosomal membranes, delivers bivalent cations from the cytosol into these acidic compartments where they may directly affect antimicrobial activity. Involved in iron metabolism and host natural resistance to infection with intracellular parasites. Pathogen resistance involves sequestration of Fe(2+) and Mn(2+), cofactors of both prokaryotic and eukaryotic catalases and superoxide dismutases, not only to protect the macrophage against its own generation of reactive oxygen species, but to deny the cations to the pathogen for synthesis of its protective enzymes. This Homo sapiens (Human) protein is Natural resistance-associated macrophage protein 1.